Consider the following 342-residue polypeptide: Anthranilate phosphoribosyltransferase (342 aa).

5-phospho-alpha-D-ribose 1-diphosphate contacts are provided by residues Gly83, 86–87, Thr91, 93–96, 111–119, and Ser123; these read GD, NIST, and KHGNRGVSS. Residue Gly83 coordinates anthranilate. Position 95 (Ser95) interacts with Mg(2+). Asn114 contacts anthranilate. Arg169 serves as a coordination point for anthranilate. Mg(2+)-binding residues include Asp228 and Glu229.

Belongs to the anthranilate phosphoribosyltransferase family. Homodimer. It depends on Mg(2+) as a cofactor.

The catalysed reaction is N-(5-phospho-beta-D-ribosyl)anthranilate + diphosphate = 5-phospho-alpha-D-ribose 1-diphosphate + anthranilate. The protein operates within amino-acid biosynthesis; L-tryptophan biosynthesis; L-tryptophan from chorismate: step 2/5. Catalyzes the transfer of the phosphoribosyl group of 5-phosphorylribose-1-pyrophosphate (PRPP) to anthranilate to yield N-(5'-phosphoribosyl)-anthranilate (PRA). The sequence is that of Anthranilate phosphoribosyltransferase from Paraburkholderia phymatum (strain DSM 17167 / CIP 108236 / LMG 21445 / STM815) (Burkholderia phymatum).